Consider the following 713-residue polypeptide: Calpastatin (713 aa).

Disordered stretches follow at residues 1-187 (MNPT…LDPM) and 211-506 (DKKE…PVLP). The segment covering 21-30 (PNKKRHKKQA) has biased composition (basic residues). A Glycyl lysine isopeptide (Lys-Gly) (interchain with G-Cter in SUMO2) cross-link involves residue lysine 32. Basic and acidic residues predominate over residues 46–63 (VVHEKKTQEVKPKEHPEP). Position 50 is an N6-acetyllysine (lysine 50). A compositionally biased stretch (polar residues) spans 85-94 (SRSNEQPTSE). Phosphoserine occurs at positions 87 and 134. A Phosphothreonine modification is found at threonine 136. Residues 171–223 (TEEDNTTYTGPEVLDPMSSTYIEELGKREVTLPPKYRELLDKKEGIPVPPPDT) form an Inhibitory domain 1 repeat. A Phosphoserine modification is found at serine 244. Composition is skewed to basic and acidic residues over residues 248–258 (DGKKTEKEKST), 304–332 (RKSEPELDLSSIKEIDEAKAKEEKLKKCG), and 342–367 (YRLKPAMDKDGKPLLPEAEEKPKPLS). Residues 307 to 359 (EPELDLSSIKEIDEAKAKEEKLKKCGEDDETVPPEYRLKPAMDKDGKPLLPEA) form an Inhibitory domain 2 repeat. Phosphoserine is present on residues serine 367, serine 369, and serine 376. Positions 370 to 379 (ELIDELSEDF) are enriched in acidic residues. The segment covering 380-397 (DQSKRKEKQSKPTEKTKE) has biased composition (basic and acidic residues). Serine 441 bears the Phosphoserine mark. Over residues 443 to 502 (GKKEADPEDGKPVEDKVKEKAKEEDREKLGEKEETIPPDYRLEEVKDKDGKTLPHKDPKE) the composition is skewed to basic and acidic residues. Residues 447 to 500 (ADPEDGKPVEDKVKEKAKEEDREKLGEKEETIPPDYRLEEVKDKDGKTLPHKDP) form an Inhibitory domain 3 repeat. A phosphoserine mark is found at serine 517 and serine 528. The segment at 536–713 (SAAVSEVVSQ…KQKSDGKSTS (178 aa)) is disordered. Residues 542 to 553 (VVSQTSAPTTHS) are compositionally biased toward polar residues. Serine 575 and serine 577 each carry phosphoserine. The stretch at 583–636 (PDPDENKPIEDKVKEKAEAEHRDKLGERDDTIPPEYRHLLDKDEEGKSTKPPTK) is one Inhibitory domain 4 repeat. 2 stretches are compositionally biased toward basic and acidic residues: residues 583–646 (PDPD…KPEA) and 691–713 (KAKDSTKAKEETSKQKSDGKSTS).

It belongs to the protease inhibitor I27 (calpastatin) family.

Specific inhibition of calpain (calcium-dependent cysteine protease). Plays a key role in postmortem tenderization of meat and have been proposed to be involved in muscle protein degradation in living tissue. This chain is Calpastatin (CAST), found in Sus scrofa (Pig).